The sequence spans 128 residues: Fluoride-specific ion channel FluC (128 aa).

A run of 4 helical transmembrane segments spans residues 5-25, 32-52, 70-90, and 106-126; these read ALVALGSAIGGTLRYWLSMVI, TFPWATLVINVAGSAAIGLFA, FFMVGICGGFTTFSSFSLQTL, and VGSVALCLLAVWLGHVAATII. Na(+) is bound by residues glycine 77 and threonine 80.

The protein belongs to the fluoride channel Fluc/FEX (TC 1.A.43) family.

It localises to the cell inner membrane. It carries out the reaction fluoride(in) = fluoride(out). Na(+) is not transported, but it plays an essential structural role and its presence is essential for fluoride channel function. Functionally, fluoride-specific ion channel. Important for reducing fluoride concentration in the cell, thus reducing its toxicity. The sequence is that of Fluoride-specific ion channel FluC from Paramagnetospirillum magneticum (strain ATCC 700264 / AMB-1) (Magnetospirillum magneticum).